The primary structure comprises 431 residues: 3-phosphoshikimate 1-carboxyvinyltransferase (431 aa).

3-phosphoshikimate-binding residues include K22, S23, and R27. K22 contributes to the phosphoenolpyruvate binding site. 2 residues coordinate phosphoenolpyruvate: G94 and R122. 3-phosphoshikimate-binding residues include S167, Q169, D315, and K342. Residue Q169 coordinates phosphoenolpyruvate. D315 acts as the Proton acceptor in catalysis. Phosphoenolpyruvate is bound by residues R346 and R388.

Belongs to the EPSP synthase family. As to quaternary structure, monomer.

It is found in the cytoplasm. The catalysed reaction is 3-phosphoshikimate + phosphoenolpyruvate = 5-O-(1-carboxyvinyl)-3-phosphoshikimate + phosphate. Its pathway is metabolic intermediate biosynthesis; chorismate biosynthesis; chorismate from D-erythrose 4-phosphate and phosphoenolpyruvate: step 6/7. Functionally, catalyzes the transfer of the enolpyruvyl moiety of phosphoenolpyruvate (PEP) to the 5-hydroxyl of shikimate-3-phosphate (S3P) to produce enolpyruvyl shikimate-3-phosphate and inorganic phosphate. The protein is 3-phosphoshikimate 1-carboxyvinyltransferase of Pelobacter propionicus (strain DSM 2379 / NBRC 103807 / OttBd1).